We begin with the raw amino-acid sequence, 199 residues long: Inner membrane protein E199L (199 aa).

Asparagine 131 is a glycosylation site (N-linked (GlcNAc...) asparagine; by host). The chain crosses the membrane as a helical span at residues 150 to 170 (INVMNHPFLTLILIILILVII).

Belongs to the asfivirus E199L family. In terms of assembly, interacts with host PYCR2; this interaction results in autophagy activation. Post-translationally, contains intramolecular disulfide bonds.

It is found in the virion membrane. The protein localises to the host membrane. Essential for viral fusion with host endosomal membrane and core release. Not required for virus morphogenesis and egress. Induces complete autophagy through the interaction with and down-regulation of host PYCR2. The protein is Inner membrane protein E199L of African swine fever virus (isolate Tick/Malawi/Lil 20-1/1983) (ASFV).